The sequence spans 852 residues: Taste receptor type 1 member 3 (852 aa).

An N-terminal signal peptide occupies residues 1 to 20; the sequence is MLGPAVLGLSLWALLHPGTG. The Extracellular portion of the chain corresponds to 21-570; sequence APLCLSQQLR…FLAWGEPAVL (550 aa). N-linked (GlcNAc...) asparagine glycosylation is found at Asn85, Asn130, Asn264, Asn285, Asn380, Asn411, Asn432, and Asn475. Positions 536–545 are required for brazzein responsiveness; the sequence is IACTFCGQDE. The chain crosses the membrane as a helical span at residues 571–591; that stretch reads LLLLLLSLALGLVLAALGLFV. Over 592 to 603 the chain is Cytoplasmic; that stretch reads HHRDSPLVQASG. The chain crosses the membrane as a helical span at residues 604-624; the sequence is GPLACFGLVCLGLVCLSVLLF. Residues 625–639 lie on the Extracellular side of the membrane; that stretch reads PGQPSPARCLAQQPL. A helical transmembrane segment spans residues 640-660; sequence SHLPLTGCLSTLFLQAAEIFV. Over 661 to 682 the chain is Cytoplasmic; it reads ESELPLSWADRLSGCLRGPWAW. The helical transmembrane segment at 683–703 threads the bilayer; it reads LVVLLAMLVEVALCTWYLVAF. The Extracellular portion of the chain corresponds to 704-729; sequence PPEVVTDWHMLPTEALVHCRTRSWVS. The chain crosses the membrane as a helical span at residues 730-750; sequence FGLAHATNATLAFLCFLGTFL. Residues 751-762 lie on the Cytoplasmic side of the membrane; the sequence is VRSQPGCYNRAR. Residues 763-783 form a helical membrane-spanning segment; sequence GLTFAMLAYFITWVSFVPLLA. The Extracellular segment spans residues 784-789; it reads NVQVVL. Residues 790–810 traverse the membrane as a helical segment; sequence RPAVQMGALLLCVLGILAAFH. At 811 to 852 the chain is on the cytoplasmic side; that stretch reads LPRCYLLMRQPGLNTPEFFLGGGPGDAQGQNDGNTGNQGKHE.

The protein belongs to the G-protein coupled receptor 3 family. TAS1R subfamily. In terms of assembly, forms homodimers or heterodimers with TAS1R1 and TAS1R2.

It is found in the cell membrane. Its function is as follows. Putative taste receptor. TAS1R1/TAS1R3 responds to the umami taste stimulus (the taste of monosodium glutamate). TAS1R2/TAS1R3 recognizes diverse natural and synthetic sweeteners. TAS1R3 is essential for the recognition and response to the disaccharide trehalose. Sequence differences within and between species can significantly influence the selectivity and specificity of taste responses. The polypeptide is Taste receptor type 1 member 3 (TAS1R3) (Homo sapiens (Human)).